The primary structure comprises 832 residues: Leucine--tRNA ligase (832 aa).

The 'HIGH' region signature appears at 58 to 68 (PYPSGDLHMGH). The short motif at 598–602 (AMSKS) is the 'KMSKS' region element. Lys-601 lines the ATP pocket.

This sequence belongs to the class-I aminoacyl-tRNA synthetase family.

The protein localises to the cytoplasm. The catalysed reaction is tRNA(Leu) + L-leucine + ATP = L-leucyl-tRNA(Leu) + AMP + diphosphate. This is Leucine--tRNA ligase from Acidothermus cellulolyticus (strain ATCC 43068 / DSM 8971 / 11B).